Here is a 50-residue protein sequence, read N- to C-terminus: Putative protein HokG (50 aa).

A helical transmembrane segment spans residues 5-25 (YALVAIIVLCCTVLGFTLMVG).

Belongs to the Hok/Gef family.

Its subcellular location is the cell inner membrane. Toxic component of a type I toxin-antitoxin (TA) system. When overexpressed kills cells within minutes; causes collapse of the transmembrane potential and arrest of respiration. Its toxic effect is probably neutralized by an antisense antitoxin Sok RNA. This is Putative protein HokG (hokG) from Escherichia coli O157:H7.